We begin with the raw amino-acid sequence, 291 residues long: Nucleotide-binding protein LJ_0866 (291 aa).

13 to 20 contributes to the ATP binding site; sequence GMSGAGKT. 63–66 is a GTP binding site; it reads DLRV.

It belongs to the RapZ-like family.

Its function is as follows. Displays ATPase and GTPase activities. The polypeptide is Nucleotide-binding protein LJ_0866 (Lactobacillus johnsonii (strain CNCM I-12250 / La1 / NCC 533)).